A 473-amino-acid polypeptide reads, in one-letter code: Ammonium transporter Rh type C (473 aa).

Residues 1–9 (MLRNSNMRW) are Cytoplasmic-facing. A helical transmembrane segment spans residues 10 to 30 (RLPLICFVWEIAMIVLFGIFV). Over 31 to 61 (RYNDEADPHWPIFMKHENITSDIENDFYFRY) the chain is Extracellular. Asn-48 carries N-linked (GlcNAc...) asparagine glycosylation. The helical transmembrane segment at 62–82 (PSFQDVHVMIFVGFGFLMTFL) threads the bilayer. The Cytoplasmic segment spans residues 83–86 (QRYG). A helical transmembrane segment spans residues 87 to 107 (FGSVAFNFLLAAFGIQWALLM). Over 108 to 125 (QGWFHTFVNGKILIGVES) the chain is Extracellular. The helical transmembrane segment at 126–145 (LINADFCVGSVCIAFGGVLG) threads the bilayer. The Cytoplasmic segment spans residues 146-151 (KVSPVQ). Residues 152 to 171 (IMLMTLFQVTLFAVNEWILL) form a helical membrane-spanning segment. At 172–179 (NKLHVIDA) the chain is on the extracellular side. A helical membrane pass occupies residues 180–200 (GGSMTIHTFGAYFGLTVAWIL). The Cytoplasmic segment spans residues 201-219 (SRPKLKQNNDKEGSTYISD). The chain crosses the membrane as a helical span at residues 220–240 (LFSMIGTLFLWMYWPSFNSAI). Over 241–251 (SYHGDAQHRAA) the chain is Extracellular. Residues 252 to 272 (INTYCSLAACVLTTVAISSVV) form a helical membrane-spanning segment. At 273–285 (NKKGKLEMVHIQN) the chain is on the cytoplasmic side. Residues 286–306 (ATLAGGVAVGTAAEMMLTPYG) form a helical membrane-spanning segment. Residue Ser-307 is a topological domain, extracellular. A helical membrane pass occupies residues 308–328 (LIVGFICGIVSTLGFTYLSPI). Residues 329-343 (LSNKLRLHDTCGIHN) are Cytoplasmic-facing. A helical transmembrane segment spans residues 344–364 (LHAIPGLIGGIVGAVTAACAT). Residues 365–396 (EGVYTAEGLKKMFHFEGEYADRTPSIQGIYQA) are Extracellular-facing. Residues 397–417 (AGIGVSLAFGIVGGTVVGCIL) traverse the membrane as a helical segment. Residues 418-473 (KLPIWGDPSDENCFDDDVYWELREEDEEEHLGAANQYITHLPENFKLPDRTEISFK) are Cytoplasmic-facing.

The protein belongs to the ammonium transporter (TC 2.A.49) family. Rh subfamily. In terms of assembly, homotrimer.

The protein localises to the apical cell membrane. Functions as an ammonia transporter. The sequence is that of Ammonium transporter Rh type C (rhcg) from Xenopus laevis (African clawed frog).